Reading from the N-terminus, the 401-residue chain is Imidazolonepropionase (401 aa).

The Fe(3+) site is built by His70 and His72. Residues His70 and His72 each contribute to the Zn(2+) site. Residues Arg79, Tyr142, and His175 each coordinate 4-imidazolone-5-propanoate. Residue Tyr142 participates in N-formimidoyl-L-glutamate binding. Residue His240 coordinates Fe(3+). His240 contributes to the Zn(2+) binding site. 4-imidazolone-5-propanoate is bound at residue Gln243. Residue Asp315 coordinates Fe(3+). Asp315 lines the Zn(2+) pocket. N-formimidoyl-L-glutamate contacts are provided by Asn317 and Gly319. A 4-imidazolone-5-propanoate-binding site is contributed by Thr320.

Belongs to the metallo-dependent hydrolases superfamily. HutI family. The cofactor is Zn(2+). It depends on Fe(3+) as a cofactor.

The protein localises to the cytoplasm. The enzyme catalyses 4-imidazolone-5-propanoate + H2O = N-formimidoyl-L-glutamate. It participates in amino-acid degradation; L-histidine degradation into L-glutamate; N-formimidoyl-L-glutamate from L-histidine: step 3/3. Its function is as follows. Catalyzes the hydrolytic cleavage of the carbon-nitrogen bond in imidazolone-5-propanoate to yield N-formimidoyl-L-glutamate. It is the third step in the universal histidine degradation pathway. In Caulobacter sp. (strain K31), this protein is Imidazolonepropionase.